Consider the following 148-residue polypeptide: Lysozyme-like protein 6 (148 aa).

A signal peptide spans 1–19; it reads MTKALLIYLVSSFLALNQA. The C-type lysozyme domain maps to 20-148; sequence SLISRCDLAQ…FYWLTGCRLR (129 aa). 4 cysteine pairs are disulfide-bonded: Cys25/Cys145, Cys49/Cys133, Cys83/Cys98, and Cys94/Cys112. Active-site residues include Glu54 and Asp71.

This sequence belongs to the glycosyl hydrolase 22 family. As to quaternary structure, monomer. Expressed in testis, epididymis and spermatozoa (at protein level). Expressed in late-stage spermatocytes and round spermatids.

Its subcellular location is the secreted. It localises to the cell surface. It is found in the cell projection. The protein resides in the cilium. The protein localises to the flagellum. It catalyses the reaction Hydrolysis of (1-&gt;4)-beta-linkages between N-acetylmuramic acid and N-acetyl-D-glucosamine residues in a peptidoglycan and between N-acetyl-D-glucosamine residues in chitodextrins.. May be involved sperm-egg plasma membrane adhesion and fusion during fertilization. Exhibits bacteriolytic activity in vitro against Micrococcus luteus and Staphylococcus aureus. Shows weak bacteriolytic activity against Gram-positive bacteria at physiological pH. Bacteriolytic activity is pH-dependent, with a maximum at around pH 5.6. This is Lysozyme-like protein 6 (LYZL6) from Homo sapiens (Human).